A 270-amino-acid polypeptide reads, in one-letter code: MPELPEVETTRRGLAPHLQGRRVHGVILRRADLRWPIPPEVAELLPGQRIEDIRRRAKYLLLDTAIGSAVLHLGMSGSLRVLPGDTPLRAHDHVDISLDNGRLLRFNDPRRFGSLLWQPAGEVHPLLQGLGPEPLDDAFDGDYLFARSRGRSAPVKTFLMDQAVVVGVGNIYAAESLFKAGISPLREAGKISRERYQRLADAVKEILGYAITRGGTTLRDFISPDGAPGYFEQELLVYGRDGLPCPNCGRALKHATIGQRASVWCSHCQR.

The Schiff-base intermediate with DNA role is filled by Pro-2. Glu-3 serves as the catalytic Proton donor. Lys-58 serves as the catalytic Proton donor; for beta-elimination activity. DNA contacts are provided by His-91, Arg-110, and Arg-151. The FPG-type zinc finger occupies 236 to 270 (LVYGRDGLPCPNCGRALKHATIGQRASVWCSHCQR). Arg-260 acts as the Proton donor; for delta-elimination activity in catalysis.

This sequence belongs to the FPG family. In terms of assembly, monomer. Zn(2+) is required as a cofactor.

The enzyme catalyses Hydrolysis of DNA containing ring-opened 7-methylguanine residues, releasing 2,6-diamino-4-hydroxy-5-(N-methyl)formamidopyrimidine.. It catalyses the reaction 2'-deoxyribonucleotide-(2'-deoxyribose 5'-phosphate)-2'-deoxyribonucleotide-DNA = a 3'-end 2'-deoxyribonucleotide-(2,3-dehydro-2,3-deoxyribose 5'-phosphate)-DNA + a 5'-end 5'-phospho-2'-deoxyribonucleoside-DNA + H(+). Involved in base excision repair of DNA damaged by oxidation or by mutagenic agents. Acts as a DNA glycosylase that recognizes and removes damaged bases. Has a preference for oxidized purines, such as 7,8-dihydro-8-oxoguanine (8-oxoG). Has AP (apurinic/apyrimidinic) lyase activity and introduces nicks in the DNA strand. Cleaves the DNA backbone by beta-delta elimination to generate a single-strand break at the site of the removed base with both 3'- and 5'-phosphates. The sequence is that of Formamidopyrimidine-DNA glycosylase from Stenotrophomonas maltophilia (strain K279a).